The primary structure comprises 224 residues: Uridylate kinase (224 aa).

8–12 lines the ATP pocket; that stretch reads KITGK. Residue glycine 43 coordinates UMP. Residues glycine 44 and arginine 48 each contribute to the ATP site. UMP is bound by residues aspartate 66 and 114–120; that span reads LIPGQST. Serine 140, tyrosine 146, and aspartate 149 together coordinate ATP.

It belongs to the UMP kinase family. As to quaternary structure, homohexamer.

Its subcellular location is the cytoplasm. It catalyses the reaction UMP + ATP = UDP + ADP. The protein operates within pyrimidine metabolism; CTP biosynthesis via de novo pathway; UDP from UMP (UMPK route): step 1/1. Its activity is regulated as follows. Inhibited by UTP. Its function is as follows. Catalyzes the reversible phosphorylation of UMP to UDP. This is Uridylate kinase from Staphylothermus marinus (strain ATCC 43588 / DSM 3639 / JCM 9404 / F1).